The chain runs to 568 residues: Protein NDNF (568 aa).

The first 19 residues, 1–19 (MELFYWCLLCLLLPLTSRT), serve as a signal peptide directing secretion. Fibronectin type-III domains follow at residues 261-331 (NLGK…VGAF) and 445-564 (PSLP…IVKT). N322 and N488 each carry an N-linked (GlcNAc...) asparagine glycan.

Binds heparin and chondroitin sulfate. O-glycosylated; contains heparan sulfate and chondroitin sulfate. In terms of processing, N-glycosylated. In terms of tissue distribution, expressed in brain and spinal cord with no expression detected in heart, kidney or liver. Expressed by neurons but not by astrocytes. In the brain, detected in the cerebrum, cerebellum and olfactory bulbs. In the cerebral cortex, highly expressed in Cajal-Retzius cells. Also expressed in hippocampal neurons and in Purkinje and granule cells of the cerebellum (at protein level). Expressed in neurons along the GnRH migratory route.

It localises to the secreted. In terms of biological role, secretory protein that plays a role in various cellular processes. Acts as a chemorepellent acting on gonadotropin-releasing hormone (GnRH) expressing neurons regulating their migration to the hypothalamus. Also promotes neuron migration, growth and survival as well as neurite outgrowth and is involved in the development of the olfactory system. May also act through the regulation of growth factors activity and downstream signaling. Also regulates extracellular matrix assembly and cell adhesiveness. Promotes endothelial cell survival, vessel formation and plays an important role in the process of revascularization through NOS3-dependent mechanisms. This Mus musculus (Mouse) protein is Protein NDNF (Ndnf).